We begin with the raw amino-acid sequence, 340 residues long: Protein RecA (340 aa).

74 to 81 (GPESSGKT) is an ATP binding site.

The protein belongs to the RecA family.

It is found in the cytoplasm. Can catalyze the hydrolysis of ATP in the presence of single-stranded DNA, the ATP-dependent uptake of single-stranded DNA by duplex DNA, and the ATP-dependent hybridization of homologous single-stranded DNAs. It interacts with LexA causing its activation and leading to its autocatalytic cleavage. This chain is Protein RecA, found in Porphyromonas gingivalis (strain ATCC 33277 / DSM 20709 / CIP 103683 / JCM 12257 / NCTC 11834 / 2561).